We begin with the raw amino-acid sequence, 466 residues long: Adenosylhomocysteinase (466 aa).

Residues T57, D132, and E192 each contribute to the substrate site. 193–195 (TTT) contributes to the NAD(+) binding site. The substrate site is built by K222 and D226. NAD(+) is bound by residues N227, 256–261 (GYGDVG), E279, N314, 335–337 (IGH), and N380.

This sequence belongs to the adenosylhomocysteinase family. It depends on NAD(+) as a cofactor.

The protein resides in the cytoplasm. It carries out the reaction S-adenosyl-L-homocysteine + H2O = L-homocysteine + adenosine. It functions in the pathway amino-acid biosynthesis; L-homocysteine biosynthesis; L-homocysteine from S-adenosyl-L-homocysteine: step 1/1. May play a key role in the regulation of the intracellular concentration of adenosylhomocysteine. This is Adenosylhomocysteinase from Sinorhizobium medicae (strain WSM419) (Ensifer medicae).